The following is a 1667-amino-acid chain: Androglobin (1667 aa).

The segment covering 1-11 has biased composition (basic residues); the sequence is MASKQTKKKEV. Disordered stretches follow at residues 1 to 45, 347 to 387, and 540 to 566; these read MASK…KGKF, SLTT…KFSL, and GSDLPSVSETDETATHSQTDLSQITKA. One can recognise a Calpain catalytic domain in the interval 70–411; it reads KDKTGKSPVF…SLSDCSSAIQ (342 aa). Residues 353–384 show a composition bias toward basic and acidic residues; the sequence is APEKSDKVPKEKADARDIGKKRSKDGEKEKFK. Residues 554 to 566 show a composition bias toward polar residues; sequence THSQTDLSQITKA. A Globin; C-terminal part domain is found at 763–890; sequence HICSMVSFVI…EEVSLVEWLD (128 aa). Heme b-binding residues include Gln792 and His824. The IQ domain maps to 906-935; that stretch reads EVAAAIKIQAMWRGTYVRLLMKARIPDTKE. Positions 936 to 968 constitute a Globin; N-terminal part domain; that stretch reads NISVADTLQKVWAVLEMNLEQYAVSLLRLMFKS. Disordered regions lie at residues 1297-1355 and 1420-1522; these read INLG…QQED and TSDA…RSPT. Positions 1301-1315 are enriched in polar residues; it reads SPDSHTISEGQKSSV. 2 stretches are compositionally biased toward basic and acidic residues: residues 1325 to 1340 and 1433 to 1450; these read EKSSEKEKTAKEKQAP and TKPKEEVETAARGVKEPN. Positions 1451–1468 are enriched in polar residues; it reads SKNSAGSESKEMTQTGSG. Over residues 1487–1498 the composition is skewed to low complexity; it reads STSSESGGVSSP. A compositionally biased stretch (basic and acidic residues) spans 1499-1511; it reads GKEEREQSTRKEN. Residues 1512-1522 are compositionally biased toward polar residues; the sequence is IQTGPRTRSPT. The stretch at 1588-1629 forms a coiled coil; that stretch reads QEERLKLKDEVLDMYKEMQDSLDEARQKIFDIREEYRNKLLE. Residues 1646-1667 are disordered; the sequence is KLETEKMTPAPDTQKKKKGKKK.

It in the central section; belongs to the globin family. The protein in the N-terminal section; belongs to the peptidase C2 family. Interacts with septin SEPT10; contributes to in vitro proteolytic cleavage of SEPT10 in a calmodulin-dependent manner. Interacts with CFAP69. Interacts with SPEF2. May interact with calmodulin.

The protein localises to the cell projection. It localises to the cilium. It is found in the flagellum. In terms of biological role, probable chimeric globin with a bis-histidyl six-coordinate heme-iron atom through which it could bind dioxygen, carbon monoxide and nitric oxide. Required for sperm flagellum formation and maturation of elongating spermatids, thus playing an essential role in male fertility. This is Androglobin from Homo sapiens (Human).